Consider the following 895-residue polypeptide: Alanine--tRNA ligase (895 aa).

Zn(2+) contacts are provided by His577, His581, Cys680, and His684.

It belongs to the class-II aminoacyl-tRNA synthetase family. Zn(2+) serves as cofactor.

Its subcellular location is the cytoplasm. The catalysed reaction is tRNA(Ala) + L-alanine + ATP = L-alanyl-tRNA(Ala) + AMP + diphosphate. Catalyzes the attachment of alanine to tRNA(Ala) in a two-step reaction: alanine is first activated by ATP to form Ala-AMP and then transferred to the acceptor end of tRNA(Ala). Also edits incorrectly charged Ser-tRNA(Ala) and Gly-tRNA(Ala) via its editing domain. This chain is Alanine--tRNA ligase, found in Kocuria rhizophila (strain ATCC 9341 / DSM 348 / NBRC 103217 / DC2201).